We begin with the raw amino-acid sequence, 133 residues long: Large ribosomal subunit protein bL20 (133 aa).

The protein belongs to the bacterial ribosomal protein bL20 family.

Functionally, binds directly to 23S ribosomal RNA and is necessary for the in vitro assembly process of the 50S ribosomal subunit. It is not involved in the protein synthesizing functions of that subunit. This Bartonella quintana (strain Toulouse) (Rochalimaea quintana) protein is Large ribosomal subunit protein bL20.